Consider the following 61-residue polypeptide: LECHNQQSSQAPTTKTCSGETNCYKKWWSDHRGTIIERGCGCPKVKPGVNLNCCRTDRCNN.

Cystine bridges form between cysteine 3-cysteine 23, cysteine 17-cysteine 40, cysteine 42-cysteine 53, and cysteine 54-cysteine 59.

Belongs to the three-finger toxin family. Short-chain subfamily. Type I alpha-neurotoxin sub-subfamily. Expressed by the venom gland.

It is found in the secreted. Its function is as follows. Produces peripheral paralysis by blocking neuromuscular transmission at the postsynaptic site. Binds to the nicotinic acetylcholine receptor. This Naja kaouthia (Monocled cobra) protein is Cobrotoxin-c.